Consider the following 440-residue polypeptide: Exodeoxyribonuclease 7 large subunit (440 aa).

Belongs to the XseA family. As to quaternary structure, heterooligomer composed of large and small subunits.

It is found in the cytoplasm. It catalyses the reaction Exonucleolytic cleavage in either 5'- to 3'- or 3'- to 5'-direction to yield nucleoside 5'-phosphates.. Its function is as follows. Bidirectionally degrades single-stranded DNA into large acid-insoluble oligonucleotides, which are then degraded further into small acid-soluble oligonucleotides. This Ralstonia nicotianae (strain ATCC BAA-1114 / GMI1000) (Ralstonia solanacearum) protein is Exodeoxyribonuclease 7 large subunit.